The primary structure comprises 142 residues: AP-2 complex subunit sigma (142 aa).

This sequence belongs to the adaptor complexes small subunit family. In terms of assembly, adaptor protein complex 2 (AP-2) is a heterotetramer composed of two large adaptins (alpha-type and beta-type subunits), a medium adaptin (mu-type subunit) and a small adaptin (sigma-type subunit).

It localises to the cell membrane. The protein localises to the membrane. It is found in the coated pit. Functionally, subunit of the adaptor protein complex 2 (AP-2). Adaptor protein complexes function in protein transport via transport vesicles in different membrane traffic pathways. Adaptor protein complexes are vesicle coat components and appear to be involved in cargo selection and vesicle formation. AP-2 is involved in clathrin-dependent endocytosis in which cargo proteins are incorporated into vesicles surrounded by clathrin (clathrin-coated vesicles, CCVs) which are destined for fusion with the early endosome. The complex binds polyphosphoinositides. The chain is AP-2 complex subunit sigma (AP17) from Arabidopsis thaliana (Mouse-ear cress).